The chain runs to 365 residues: Alanine racemase (365 aa).

Lys32 acts as the Proton acceptor; specific for D-alanine in catalysis. Lys32 carries the N6-(pyridoxal phosphate)lysine modification. Substrate is bound at residue Arg128. Residue Tyr257 is the Proton acceptor; specific for L-alanine of the active site. Met305 contributes to the substrate binding site.

This sequence belongs to the alanine racemase family. Pyridoxal 5'-phosphate serves as cofactor.

It catalyses the reaction L-alanine = D-alanine. It functions in the pathway amino-acid biosynthesis; D-alanine biosynthesis; D-alanine from L-alanine: step 1/1. In terms of biological role, catalyzes the interconversion of L-alanine and D-alanine. May also act on other amino acids. The polypeptide is Alanine racemase (alr) (Francisella tularensis subsp. novicida (strain U112)).